The following is a 1335-amino-acid chain: Bifunctional autolysin (1335 aa).

A signal peptide spans 1–29; sequence MAKKFNYKLPSMVALTLFGTAFTAHQANA. Disordered stretches follow at residues 51–88, 100–262, and 514–535; these read QAEK…QSTT, NEIS…KYKE, and WGTT…NNKL. 5 stretches are compositionally biased toward polar residues: residues 58-88, 100-127, 143-155, 176-223, and 244-258; these read EVTQ…QSTT, NEIS…VTKN, TDTN…QSVA, TASQ…NASG, and SLNN…TTSY. An N-acetylmuramoyl-L-alanine amidase region spans residues 303–863; sequence VSSQKTSSLP…LSTQSTPAPK (561 aa). Positions 515–531 are enriched in low complexity; sequence GTTSTKPSQPSKPSGGT. 7 consecutive GW domains span residues 533–610, 612–686, 700–774, 776–850, 868–943, 945–1020, and 1023–1096; these read NKLT…YNTA, APVK…TASK, TVTN…YNTA, SPVK…APSK, STQT…TQNI, KQTQ…QNST, and QSTP…KEKI. Residues 864 to 1335 are endo-beta-N-acetylglucosaminidase; that stretch reads QVKPSTQTVN…GKYFEIPTYK (472 aa).

The protein in the N-terminal section; belongs to the N-acetylmuramoyl-L-alanine amidase 2 family. It in the C-terminal section; belongs to the glycosyl hydrolase 73 family. In terms of assembly, oligomer; forms a ring structure at the cell surface which is important for efficient partitioning of daughter cells after cell division. In terms of processing, undergoes proteolytic processing to generate the two extracellular lytic enzymes, probably at the septal region on the cell surface.

It localises to the secreted. The catalysed reaction is Hydrolyzes the link between N-acetylmuramoyl residues and L-amino acid residues in certain cell-wall glycopeptides.. It catalyses the reaction an N(4)-(oligosaccharide-(1-&gt;3)-[oligosaccharide-(1-&gt;6)]-beta-D-Man-(1-&gt;4)-beta-D-GlcNAc-(1-&gt;4)-alpha-D-GlcNAc)-L-asparaginyl-[protein] + H2O = an oligosaccharide-(1-&gt;3)-[oligosaccharide-(1-&gt;6)]-beta-D-Man-(1-&gt;4)-D-GlcNAc + N(4)-(N-acetyl-beta-D-glucosaminyl)-L-asparaginyl-[protein]. Its function is as follows. Endohydrolysis of the di-N-acetylchitobiosyl unit in high-mannose glycopeptides and glycoproteins containing the -[(Man)5(GlcNAc)2]-Asn structure. One N-acetyl-D-glucosamine residue remains attached to the protein; the rest of the oligosaccharide is released intact. Cleaves the peptidoglycan connecting the daughter cells at the end of the cell division cycle, resulting in the separation of the two newly divided cells. Acts as an autolysin in penicillin-induced lysis. As a bacterial surface-associated protein, mediates attachment to polystyrene surfaces, contributing to biofilm formation. Also has vitronectin-binding activity. The chain is Bifunctional autolysin (atl) from Staphylococcus epidermidis.